A 355-amino-acid chain; its full sequence is uncharacterized protein (355 aa).

Residues 1-104 (MGTKGLPLYP…EQAKTVQGGR (104 aa)) form a disordered region. K19 carries the post-translational modification N6-acetyllysine. Positions 45–54 (EEGTDLEGDM) are enriched in acidic residues. Phosphoserine is present on S175. Disordered stretches follow at residues 247-310 (PRGS…AAYK) and 325-355 (SITSLSSRTTELPAADPFALAPFPSKSGKKP). Position 293 is a phosphotyrosine (Y293). The residue at position 294 (S294) is a Phosphoserine. Residues 325-334 (SITSLSSRTT) are compositionally biased toward polar residues. Residues 336-348 (LPAADPFALAPFP) are compositionally biased toward low complexity.

This is an uncharacterized protein from Homo sapiens (Human).